A 234-amino-acid chain; its full sequence is Peptidyl-prolyl cis-trans isomerase, rhodopsin-specific isozyme (234 aa).

Residues 1–19 form the signal peptide; it reads MNILKILILLELIYTCVSG. The region spanning 29–187 is the PPIase cyclophilin-type domain; that stretch reads YMDVKHQKKP…DPVIIVNCGE (159 aa). Asparagine 67 carries N-linked (GlcNAc...) asparagine glycosylation. Residues 202-222 form a helical membrane-spanning segment; the sequence is ILGWIKAAGLPFCSSFIVLMI.

Belongs to the cyclophilin-type PPIase family. Expressed specifically in photoreceptor cells.

The protein resides in the membrane. It catalyses the reaction [protein]-peptidylproline (omega=180) = [protein]-peptidylproline (omega=0). Functionally, PPIases accelerate the folding of proteins. It catalyzes the cis-trans isomerization of proline imidic peptide bonds in oligopeptides. Acts on the folding of rhodopsin RH1 and RH2 (but not RH3) and is required for visual transduction. The sequence is that of Peptidyl-prolyl cis-trans isomerase, rhodopsin-specific isozyme (NINAA) from Calliphora vicina (Blue blowfly).